A 461-amino-acid chain; its full sequence is pre-mRNA splicing regulator USH1G (461 aa).

3 ANK repeats span residues 31–60 (DGMT…DPDK), 64–93 (WGNT…NIWC), and 97–126 (DYHT…KQSS). 2 disordered regions span residues 208–243 (GTAR…SARS) and 332–368 (EDGG…DRSC). Residues 210-222 (ARGKTKMQKKLER) are compositionally biased toward basic residues. An SAM domain is found at 385–447 (LEPETSPLET…KILGAVRRRR (63 aa)). Serine 422 carries the post-translational modification Phosphoserine; by CK2.

As to quaternary structure, part of a complex composed of USH1C, USH1G and MYO7A. Interacts with USH1C (via the first PDZ domain). Interacts with PDZD7. Interacts with CDH23 and PCDH15; these interactions may recruit USH1G to the plasma membrane. Interacts with intraflagellar transport proteins IFT20, IFT52 and IFT57. Interacts with splicing factors SF3B1, PRPF6, PRPF31 and SON. Interacts with the U4/U6.U5 tri-small nuclear ribonucleoprotein (tri-snRNP) complex in the presence of pre-mRNAs. Interacts (via SAM domain) with MAGI2 (via PDZ 6 domain); the interaction is triggered by phosphorylation of USH1G by CK2 and negatively regulates MAGI2-mediated endocytosis. In terms of tissue distribution, expressed in vestibule of the inner ear, eye and small intestine.

It localises to the cytoplasm. The protein localises to the cytosol. The protein resides in the cytoskeleton. It is found in the cell membrane. Its subcellular location is the cell projection. It localises to the cilium. The protein localises to the nucleus speckle. The protein resides in the nucleus. It is found in the cajal body. Its subcellular location is the microtubule organizing center. It localises to the centrosome. The protein localises to the photoreceptor inner segment. Functionally, plays a role in pre-mRNA splicing by regulating the release and transfer of U4/U6.U5 tri-small nuclear ribonucleoprotein (tri-snRNP) complexes from their assembly site in Cajal bodies to nuclear speckles, thereby contributing to the assembly of the pre-catalytic spliceosome on target pre-mRNAs. May also participate in recycling of snRNPs back to Cajal bodies during splicing. Plays a role in regulating MAGI2-mediated endocytosis. Anchoring/scaffolding protein that is a part of the functional network formed by USH1C, USH1G, CDH23 and MYO7A that mediates mechanotransduction in cochlear hair cells. Required for normal development and maintenance of cochlear hair cell bundles. Required for normal hearing. This is pre-mRNA splicing regulator USH1G (USH1G) from Homo sapiens (Human).